We begin with the raw amino-acid sequence, 2521 residues long: Piezo-type mechanosensitive ion channel component 1 (2521 aa).

Residues 1–12 (MEPHVLGAVLYW) are Cytoplasmic-facing. The chain crosses the membrane as a helical span at residues 13 to 25 (LLLPCALLAACLL). Residues 26–28 (RFS) are Extracellular-facing. Residues 29-44 (GLSLVYLLFLLLLPWF) traverse the membrane as a helical segment. Over 45 to 58 (PGPTRCGLQGHTGR) the chain is Cytoplasmic. The helical transmembrane segment at 59–81 (LLRALLGLSLLFLVAHLALQICL) threads the bilayer. Topologically, residues 82–121 (HIVPRLDQLLGPSCSRWETLSRHIGVTRLDLKDIPNAIRL) are extracellular. A helical membrane pass occupies residues 122–138 (VAPDLGILVVSSVCLGI). Residues 139–194 (CGRLARNTRQSPHPRELDDDERDVDASPTAGLQEAATLAPTRRSRLAARFRVTAHW) lie on the Cytoplasmic side of the membrane. The chain crosses the membrane as a helical span at residues 195-214 (LLVAAGRVLAVTLLALAGIA). The Extracellular portion of the chain corresponds to 215–216 (HP). Residues 217–236 (SALSSVYLLLFLALCTWWAC) form a helical membrane-spanning segment. Topologically, residues 237 to 247 (HFPISTRGFSR) are cytoplasmic. The chain crosses the membrane as a helical span at residues 248-268 (LCVAVGCFGAGHLICLYCYQM). Topologically, residues 269–309 (PLAQALLPPAGIWARVLGLKDFVGPTNCSSPHALVLNTGLD) are extracellular. Residue asparagine 295 is glycosylated (N-linked (GlcNAc...) asparagine). A helical membrane pass occupies residues 310–330 (WPVYASPGVLLLLCYATASLR). Topologically, residues 331–417 (KLRAYRPSGQ…EASPLHSLGH (87 aa)) are cytoplasmic. Residues 418–438 (LIMDQSYVCALIAMMVWSITY) form a helical membrane-spanning segment. At 439 to 440 (HS) the chain is on the extracellular side. A helical membrane pass occupies residues 441-456 (WLTFVLLLWACLIWTV). The Cytoplasmic portion of the chain corresponds to 457–461 (RSRHQ). Residues 462 to 484 (LAMLCSPCILLYGMTLCCLRYVW) form a helical membrane-spanning segment. The Extracellular segment spans residues 485-512 (AMDLRPELPTTLGPVSLRQLGLEHTRYP). Residues 513–530 (CLDLGAMLLYTLTFWLLL) traverse the membrane as a helical segment. Residues 531–574 (RQFVKEKLLKWAESPAALTEVTVADTEPTRTQTLLQSLGELVKG) lie on the Cytoplasmic side of the membrane. The helical transmembrane segment at 575-595 (VYAKYWIYVCAGMFIVVSFAG) threads the bilayer. Residue arginine 596 is a topological domain, extracellular. The chain crosses the membrane as a helical span at residues 597–617 (LVVYKIVYMFLFLLCLTLFQV). The Cytoplasmic segment spans residues 618-627 (YYSLWRKLLK). The helical transmembrane segment at 628–649 (AFWWLVVAYTMLVLIAVYTFQF) threads the bilayer. The Extracellular portion of the chain corresponds to 650 to 679 (QDFPAYWRNLTGFTDEQLGDLGLEQFSVSE). The chain crosses the membrane as a helical span at residues 680–696 (LFSSILVPGFFLLACIL). Residues 697–816 (QLHYFHRPFM…RRLLELHVFK (120 aa)) are Cytoplasmic-facing. Threonine 734 carries the phosphothreonine modification. The disordered stretch occupies residues 738–769 (REEQQEHQQQQQEEEEEEEDSRDEGLGVATPH). Residues 749-759 (QEEEEEEEDSR) show a composition bias toward acidic residues. Residue serine 758 is modified to Phosphoserine. A helical membrane pass occupies residues 817–828 (LVALYTVWVALK). Residues 829–831 (EVS) are Extracellular-facing. A helical membrane pass occupies residues 832 to 845 (VMNLLLVVLWAFAL). The Cytoplasmic segment spans residues 846–859 (PYPRFRPMASCLST). The chain crosses the membrane as a helical span at residues 860–874 (VWTCVIIVCKMLYQL). Topologically, residues 875–926 (KVVNPQEYSSNCTEPFPNSTNLLPTEISQSLLYRGPVDPANWFGVRKGFPNL) are extracellular. A helical transmembrane segment spans residues 927–954 (GYIQNHLQVLLLLVFEAIVYRRQEHYRR). The Cytoplasmic segment spans residues 955–994 (QHQLAPLPAQAVFASGTRQQLDQDLLGCLKYFINFFFYKF). Residues 995 to 1010 (GLEICFLMAVNVIGQR) traverse the membrane as a helical segment. Residues 1011 to 1012 (MN) are Extracellular-facing. The helical transmembrane segment at 1013–1028 (FLVTLHGCWLVAILTR) threads the bilayer. The Cytoplasmic segment spans residues 1029–1041 (RHRQAIARLWPNY). Residues 1042–1057 (CLFLALFLLYQYLLCL) traverse the membrane as a helical segment. Topologically, residues 1058–1096 (GMPPALCIDYPWRWSRAVPMNSALIKWLYLPDFFRAPNS) are extracellular. Residues 1097 to 1118 (TNLISDFLLLLCASQQWQVFSA) traverse the membrane as a helical segment. The Cytoplasmic segment spans residues 1119-1153 (ERTEEWQRMAGVNTDRLEPLRGEPNPVPNFIHCRS). Residues 1154-1180 (YLDMLKVAVFRYLFWLVLVVVFVTGAT) traverse the membrane as a helical segment. At 1181-1185 (RISIF) the chain is on the extracellular side. The chain crosses the membrane as a helical span at residues 1186-1204 (GLGYLLACFYLLLFGTALL). At 1205–1217 (QRDTRARLVLWDC) the chain is on the cytoplasmic side. The helical transmembrane segment at 1218 to 1236 (LILYNVTVIISKNMLSLLA) threads the bilayer. Residues 1237-1285 (CVFVEQMQTGFCWVIQLFSLVCTVKGYYDPKEMMDRDQDCLLPVEEAGI) lie on the Extracellular side of the membrane. A helical transmembrane segment spans residues 1286–1302 (IWDSVCFFFLLLQRRVF). Over 1303-1656 (LSHYYLHVRA…ELLLDRRLRI (354 aa)) the chain is Cytoplasmic. Residues 1339-1368 (HRRIEEKSLAQLKRQMERIRAKQEKHRQGR) are a coiled coil. Disordered regions lie at residues 1356–1402 (RIRA…RRQW), 1462–1498 (RQQEQEQARQEQAGQLPTGGGPSQEVEPAEGPEEAAA), and 1576–1630 (TLPG…DPGE). The span at 1385-1398 (LEPGPDSPGGSSPP) shows a compositional bias: low complexity. A phosphoserine mark is found at serine 1391 and serine 1396. Serine 1636 and serine 1646 each carry phosphoserine. A helical membrane pass occupies residues 1657-1700 (PELEEAELFAEGQGRALRLLRAVYQCVAAHSELLCYFIIILNHM). Residues 1701 to 1704 (VTAS) are Extracellular-facing. The helical transmembrane segment at 1705-1720 (AGSLVLPVLVFLWAML) threads the bilayer. Topologically, residues 1721–1728 (SIPRPSKR) are cytoplasmic. The chain crosses the membrane as a helical span at residues 1729–1747 (FWMTAIVFTEIAVVVKYLF). Residues 1748-1779 (QFGFFPWNSHVVLRRYENKPYFPPRILGLEKT) are Extracellular-facing. Residues 1780 to 1801 (DGYIKYDLVQLMALFFHRSQLL) form a helical membrane-spanning segment. Topologically, residues 1802 to 1960 (CYGLWDHEED…HTKYRAATDV (159 aa)) are cytoplasmic. Residues 1811–1822 (DSPSKEHDKSGE) show a composition bias toward basic and acidic residues. The segment at 1811–1921 (DSPSKEHDKS…RPSRSGGRVR (111 aa)) is disordered. Position 1854 is a phosphothreonine (threonine 1854). Basic and acidic residues predominate over residues 1859–1868 (VELRPRDTRR). A compositionally biased stretch (basic residues) spans 1869–1878 (ISLRFRRRKK). The span at 1890 to 1903 (EAEDREEEEGEEEK) shows a compositional bias: acidic residues. A compositionally biased stretch (basic and acidic residues) spans 1904 to 1913 (EAPTGREKRP). Residues 1961-1980 (YALMFLADVVDFIIIIFGFW) form a helical membrane-spanning segment. Residues 1981-2000 (AFGKHSAATDITSSLSDDQV) are Extracellular-facing. The helical transmembrane segment at 2001–2017 (PEAFLVMLLIQFSTMVV) threads the bilayer. At 2018–2031 (DRALYLRKTVLGKL) the chain is on the cytoplasmic side. Residues 2032–2052 (AFQVALVLAIHLWMFFILPAV) form a helical membrane-spanning segment. Topologically, residues 2053 to 2060 (TERMFNQN) are extracellular. Residues 2061-2076 (VVAQLWYFVKCIYFAL) form a helical membrane-spanning segment. Residues 2077-2176 (SAYQIRCGYP…KKKIVKYGMG (100 aa)) are Cytoplasmic-facing. The chain crosses the membrane as a helical span at residues 2177 to 2197 (GLIILFLIAIIWFPLLFMSLV). The Extracellular segment spans residues 2198 to 2431 (RSVVGVVNQP…IFSDKVSPPS (234 aa)). Asparagine 2294 carries an N-linked (GlcNAc...) asparagine glycan. Cysteine 2411 and cysteine 2415 are joined by a disulfide. A helical transmembrane segment spans residues 2432–2452 (LGFLAGYGIMGLYVSIVLVIG). The Cytoplasmic segment spans residues 2453–2521 (KFVRGFFSEI…TMIKWTREKE (69 aa)).

This sequence belongs to the PIEZO (TC 1.A.75) family. As to quaternary structure, homotrimer; the homotrimer forms a propeller-shaped Piezo channel with a cation-ion conducting pore. Heterotrimeric interaction may occur between PIEZO1 and PIEZO2. Interacts with PKD2. Interacts with STOML3. Interacts with TMC1, TMC2, PCDH15 and CIB2; the interaction may be part of the MET complex. Interacts with MDFIC (via C-terminus); the interaction prolongs Piezo channel inactivation. Interacts with MDFI (via C-terminus); the interaction prolongs Piezo channel inactivation. In terms of tissue distribution, expressed in numerous tissues. In normal brain, expressed exclusively in neurons, not in astrocytes. In Alzheimer disease brains, expressed in about half of the activated astrocytes located around classical senile plaques. In Parkinson disease substantia nigra, not detected in melanin-containing neurons nor in activated astrocytes. Expressed in erythrocytes (at protein level). Expressed in myoblasts (at protein level).

It localises to the endoplasmic reticulum membrane. It is found in the endoplasmic reticulum-Golgi intermediate compartment membrane. The protein localises to the cell membrane. The protein resides in the cell projection. Its subcellular location is the lamellipodium membrane. It carries out the reaction K(+)(in) = K(+)(out). It catalyses the reaction Na(+)(in) = Na(+)(out). The catalysed reaction is Ca(2+)(in) = Ca(2+)(out). The enzyme catalyses Mg(2+)(in) = Mg(2+)(out). With respect to regulation, regulated by auxillary subunits MDFIC and MDFI. Down-regulated by phosphatidylserines exposed on the cell surface. Divalent ions decrease the single-channel permeability of K(+). In terms of biological role, pore-forming subunit of the mechanosensitive non-specific cation Piezo channel required for rapidly adapting mechanically activated (MA) currents and has a key role in sensing touch and tactile pain. Piezo channels are homotrimeric three-blade propeller-shaped structures that utilize a cap-motion and plug-and-latch mechanism to gate their ion-conducting pathways. Generates currents characterized by a linear current-voltage relationship that are sensitive to ruthenium red and gadolinium. Conductance to monovalent alkali ions is highest for K(+), intermediate for Na(+) and lowest for Li(+). Divalent ions except for Mn(2+) permeate the channel but more slowly than the monovalent ions and they also reduce K(+) currents. Plays a key role in epithelial cell adhesion by maintaining integrin activation through R-Ras recruitment to the ER, most probably in its activated state, and subsequent stimulation of calpain signaling. In inner ear hair cells, PIEZO1/2 subunits may constitute part of the mechanotransducer (MET) non-selective cation channel complex where they may act as pore-forming ion-conducting component in the complex. In the kidney, may contribute to the detection of intraluminal pressure changes and to urine flow sensing. Acts as a shear-stress sensor that promotes endothelial cell organization and alignment in the direction of blood flow through calpain activation. Plays a key role in blood vessel formation and vascular structure in both development and adult physiology. Acts as a sensor of phosphatidylserine (PS) flipping at the plasma membrane and governs morphogenesis of muscle cells. In myoblasts, flippase-mediated PS enrichment at the inner leaflet of plasma membrane triggers channel activation and Ca2+ influx followed by Rho GTPases signal transduction, leading to assembly of cortical actomyosin fibers and myotube formation. This Homo sapiens (Human) protein is Piezo-type mechanosensitive ion channel component 1.